The primary structure comprises 410 residues: Class E basic helix-loop-helix protein 41 (410 aa).

Residue K31 forms a Glycyl lysine isopeptide (Lys-Gly) (interchain with G-Cter in SUMO2) linkage. Residues 44–99 enclose the bHLH domain; sequence TYKLPHRLIEKKRRDRINECIAQLKDLLPEHLKLTTLGHLEKAVVLELTLKHLKAL. A Glycyl lysine isopeptide (Lys-Gly) (interchain with G-Cter in SUMO2) cross-link involves residue K121. An Orange domain is found at 131–166; that stretch reads FHSGFQTCAKEVLQYLARFESWTPREPRCAQLVSHL. Disordered regions lie at residues 209–255 and 360–410; these read IQRT…KRPK and GATA…KDAP. Residue K240 forms a Glycyl lysine isopeptide (Lys-Gly) (interchain with G-Cter in SUMO2) linkage.

As to quaternary structure, homodimer. Heterodimer with BHLHE40/DEC1. Interacts with CIART. Interacts with BMAL1. Interacts with RXRA. Interacts with NR0B2 and HNF1A. Expressed in skeletal muscle, brain and lung.

The protein localises to the nucleus. In terms of biological role, transcriptional repressor involved in the regulation of the circadian rhythm by negatively regulating the activity of the clock genes and clock-controlled genes. Acts as the negative limb of a novel autoregulatory feedback loop (DEC loop) which differs from the one formed by the PER and CRY transcriptional repressors (PER/CRY loop). Both these loops are interlocked as it represses the expression of PER1 and in turn is repressed by PER1/2 and CRY1/2. Represses the activity of the circadian transcriptional activator: CLOCK-BMAL1 heterodimer by competing for the binding to E-box elements (5'-CACGTG-3') found within the promoters of its target genes. Negatively regulates its own expression and the expression of DBP and BHLHE41/DEC2. Acts as a corepressor of RXR and the RXR-LXR heterodimers and represses the ligand-induced RXRA/B/G, NR1H3/LXRA, NR1H4 and VDR transactivation activity. Inhibits HNF1A-mediated transactivation of CYP1A2, CYP2E1 and CYP3A11. This chain is Class E basic helix-loop-helix protein 41 (Bhlhe41), found in Mus musculus (Mouse).